We begin with the raw amino-acid sequence, 168 residues long: Gremlin-2 (168 aa).

A signal peptide spans 1 to 21 (MFWKLSLSLFLVAVLVKVAEA). Asn-40 carries N-linked (GlcNAc...) asparagine glycosylation. 4 cysteine pairs are disulfide-bonded: Cys-73–Cys-123, Cys-87–Cys-137, Cys-97–Cys-155, and Cys-101–Cys-157. Residues 73–163 (CKTQPLRQTV…QCRCMSVNLS (91 aa)) enclose the CTCK domain. Asn-161 is a glycosylation site (N-linked (GlcNAc...) asparagine).

Belongs to the DAN family. Homodimer. Interacts with BMP2, BMP4 and BMP7, but has lower affinity for BMP7 than for BMP2 and BMP4. Binds heparin; this impairs the interaction with BMP2. In terms of processing, N-glycosylated.

Its subcellular location is the secreted. Its function is as follows. Cytokine that inhibits the activity of BMP2 and BMP4 in a dose-dependent manner, and thereby modulates signaling by BMP family members. Contributes to the regulation of embryonic morphogenesis via BMP family members. Antagonizes BMP4-induced suppression of progesterone production in granulosa cells. This chain is Gremlin-2 (GREM2), found in Homo sapiens (Human).